Consider the following 64-residue polypeptide: Conotoxin mr5.1a (64 aa).

The signal sequence occupies residues 1-19; that stretch reads MRCVPVFVILLLLIASAPS. A propeptide spanning residues 20-48 is cleaved from the precursor; it reads VDARLKTKDDMPLPSSHANIKRTLQIHRN. Glutamate 60 carries the 4-carboxyglutamate modification.

It belongs to the conotoxin T superfamily. In terms of processing, contains 2 disulfide bonds that can be either 'C1-C3, C2-C4' or 'C1-C4, C2-C3', since these disulfide connectivities have been observed for conotoxins with cysteine framework V (for examples, see AC P0DQQ7 and AC P81755). As to expression, expressed by the venom duct.

The protein localises to the secreted. This Conus marmoreus (Marble cone) protein is Conotoxin mr5.1a.